The chain runs to 230 residues: Small ribosomal subunit protein uS7m (230 aa).

This sequence belongs to the universal ribosomal protein uS7 family. In terms of assembly, part of the small ribosomal subunit.

Its subcellular location is the mitochondrion. In terms of biological role, one of the primary rRNA binding proteins, it binds directly to 18S rRNA where it nucleates assembly of the head domain of the small subunit. In Marchantia polymorpha (Common liverwort), this protein is Small ribosomal subunit protein uS7m (RPS7).